A 394-amino-acid polypeptide reads, in one-letter code: MSRLRWLTAGESHGPALVATLEGLPAGVPITTEMVADHLARRRLGYGRGARMKFERDEVTFLGGVRHGLTMGSPVAVMVGNTEWPKWEQVMAADPVDPEVLAGLARNAPLTRPRPGHADLAGMQKYGFDEARPILERASARETAARVALGAVARSYLKETAGVEIVSHVVELASAKAPHGVYPTPADVERLDADPVRCLDADASKAMVAEIDQAHKDGDTLGGVVEVLAYGVPVGLGSHVHWDRKLDARLAGALMGIQAIKGVEIGDGFELARVPGSRAHDEIVGTPDGIRRVSGRSGGTEGGLTTGELLRVRAAMKPIATVPRALKTVDVATGEAAQAHHQRSDVSAVPAAGIVAEAMVALVLADAVAEKFGGDSVTETRRNVRSYLDNLDIR.

Residues R42 and R48 each coordinate NADP(+). FMN contacts are provided by residues 137 to 139, 258 to 259, G302, 317 to 321, and R343; these read RAS, QA, and KPIAT.

It belongs to the chorismate synthase family. In terms of assembly, homotetramer. The cofactor is FMNH2.

It carries out the reaction 5-O-(1-carboxyvinyl)-3-phosphoshikimate = chorismate + phosphate. Its pathway is metabolic intermediate biosynthesis; chorismate biosynthesis; chorismate from D-erythrose 4-phosphate and phosphoenolpyruvate: step 7/7. In terms of biological role, catalyzes the anti-1,4-elimination of the C-3 phosphate and the C-6 proR hydrogen from 5-enolpyruvylshikimate-3-phosphate (EPSP) to yield chorismate, which is the branch point compound that serves as the starting substrate for the three terminal pathways of aromatic amino acid biosynthesis. This reaction introduces a second double bond into the aromatic ring system. This chain is Chorismate synthase, found in Streptomyces coelicolor (strain ATCC BAA-471 / A3(2) / M145).